A 154-amino-acid polypeptide reads, in one-letter code: 6,7-dimethyl-8-ribityllumazine synthase (154 aa).

Residues Phe-22, 57–59, and 81–83 contribute to the 5-amino-6-(D-ribitylamino)uracil site; these read AYE and AVI. Residue 86 to 87 coordinates (2S)-2-hydroxy-3-oxobutyl phosphate; the sequence is GT. Catalysis depends on His-89, which acts as the Proton donor. Position 114 (Phe-114) interacts with 5-amino-6-(D-ribitylamino)uracil. Arg-128 provides a ligand contact to (2S)-2-hydroxy-3-oxobutyl phosphate.

It belongs to the DMRL synthase family. In terms of assembly, forms an icosahedral capsid composed of 60 subunits, arranged as a dodecamer of pentamers.

It carries out the reaction (2S)-2-hydroxy-3-oxobutyl phosphate + 5-amino-6-(D-ribitylamino)uracil = 6,7-dimethyl-8-(1-D-ribityl)lumazine + phosphate + 2 H2O + H(+). Its pathway is cofactor biosynthesis; riboflavin biosynthesis; riboflavin from 2-hydroxy-3-oxobutyl phosphate and 5-amino-6-(D-ribitylamino)uracil: step 1/2. In terms of biological role, catalyzes the formation of 6,7-dimethyl-8-ribityllumazine by condensation of 5-amino-6-(D-ribitylamino)uracil with 3,4-dihydroxy-2-butanone 4-phosphate. This is the penultimate step in the biosynthesis of riboflavin. The chain is 6,7-dimethyl-8-ribityllumazine synthase from Colwellia psychrerythraea (strain 34H / ATCC BAA-681) (Vibrio psychroerythus).